Consider the following 348-residue polypeptide: D-alanine--D-alanine ligase (348 aa).

Positions 132–334 (KRVLESIGIP…YPDLIEELVT (203 aa)) constitute an ATP-grasp domain. Position 162–217 (162–217 (LARLTFPIFVKPANMGSSVGISKAQTKVELRKAIQLALTYDSRVLIEQGVVAREIE)) interacts with ATP. Mg(2+) contacts are provided by aspartate 288, glutamate 301, and asparagine 303.

This sequence belongs to the D-alanine--D-alanine ligase family. Mg(2+) serves as cofactor. The cofactor is Mn(2+).

It localises to the cytoplasm. It carries out the reaction 2 D-alanine + ATP = D-alanyl-D-alanine + ADP + phosphate + H(+). Its pathway is cell wall biogenesis; peptidoglycan biosynthesis. In terms of biological role, cell wall formation. This is D-alanine--D-alanine ligase from Streptococcus pyogenes serotype M12 (strain MGAS2096).